The sequence spans 224 residues: MEYSDKQIAAQEAVRYIKDGMVIGIGSGSTVNEFLYCLAARMRKERLQVVGIPASKKSERLATELGIPLTTFATYQNVDIAIDGTDEIDDQLYLVKGGGGSLVREKMIDLVAETFIVIASGKKKIKKLGSFPVPVEVVPFGWQATEQRLQQFGCQTNLRMVEEDIFVSDNQNYIIDCDFKEIDDAEALHRSLKQIVGVIETGIFINMVDKAIVADNGELSILEK.

Substrate contacts are provided by residues 27–30, 83–86, and 96–99; these read SGST, DGTD, and KGGG. Glutamate 105 serves as the catalytic Proton acceptor. Lysine 123 serves as a coordination point for substrate.

This sequence belongs to the ribose 5-phosphate isomerase family. In terms of assembly, homodimer.

The enzyme catalyses aldehydo-D-ribose 5-phosphate = D-ribulose 5-phosphate. Its pathway is carbohydrate degradation; pentose phosphate pathway; D-ribose 5-phosphate from D-ribulose 5-phosphate (non-oxidative stage): step 1/1. Catalyzes the reversible conversion of ribose-5-phosphate to ribulose 5-phosphate. The chain is Ribose-5-phosphate isomerase A 2 from Oceanobacillus iheyensis (strain DSM 14371 / CIP 107618 / JCM 11309 / KCTC 3954 / HTE831).